The sequence spans 536 residues: Caspase recruitment domain-containing protein 9 (536 aa).

Position 2 is a phosphoserine (Ser2). 3 residues coordinate Zn(2+): Asp3, Cys10, and His73. One can recognise a CARD domain in the interval 6–98; it reads NDDECWSVLE…QLYKKVTGKE (93 aa). The tract at residues 99–116 is linker; the sequence is PARVFSMIIDASGESGLT. Coiled coils occupy residues 117-277 and 332-419; these read QLLM…DRSS and LRKD…QQLE. Lys125 is covalently cross-linked (Glycyl lysine isopeptide (Lys-Gly) (interchain with G-Cter in ubiquitin)). Thr231 carries the phosphothreonine modification. Ser277 carries the phosphoserine modification. Ser424, Ser425, Ser431, Ser450, Ser460, Ser483, and Ser498 each carry phosphoserine. The interval 427–536 is disordered; sequence LEDGSPRRSQ…GSDNTDTEGS (110 aa). A compositionally biased stretch (basic and acidic residues) spans 487-502; the sequence is PPEKERRRLKESFENY. Residues 503–513 show a composition bias toward basic residues; the sequence is RRKRALRKMQK. Thr531 and Thr533 each carry phosphothreonine; by CK2.

Monomer. Homodimer; homodimerization is mediated by the CARD domain which forms an extensive interaction with the adjacent linker and coiled-coil regions; leads to an autoinhibited state. Homomultimer; polymerizes following activation, forming a nucleating helical template that seeds BCL10-filament formation via a CARD-CARD interaction. Interacts (via CARD domain) with BCL10 (via CARD domain); interaction takes place following CARD9 activation and polymerization, leading to the formation of a filamentous CBM complex assembly. Component of a CBM complex (CARD9-BCL10, MALT1), composed of CARD9, BCL10 and MALT1. Interacts with RASGRF1. Interacts with NOD2 (via NACHT domain); interaction is direct. Interacts with RIPK2. Interacts with VHL; without leading to protein degradation. In terms of processing, phosphorylated at Thr-231 by PRKCD downstream of C-type lectin receptors activation: phosphorylation promotes interaction with BCL10, followed by activation of NF-kappa-B and MAP kinase p38 pathways. Phosphorylated at Thr-531 and Thr-533 by CK2 following interaction with VHL, leading to inhibit the ability to activate NF-kappa-B. Ubiquitinated at Lys-125 via 'Lys-27'-linked ubiquitin by TRIM62 downstream of C-type lectin receptors activation; leading to CARD9 activation, followed by activation of NF-kappa-B and MAP kinase p38 pathways. Deubiquitinated at Lys-125 by USP15, inhibiting CARD9. In terms of tissue distribution, expression is restricted to several populations of phagocytes, such as macrophages, monocytes, and dendritic cells. Highly expressed in spleen. Also detected in liver, placenta, lung, peripheral blood leukocytes and in brain.

The protein localises to the cytoplasm. Maintained in an autoinhibited state via homodimerization in which the CARD domain forms an extensive interaction with the adjacent linker and coiled-coil regions. Activation downstream of C-type lectin receptors, by phosphorylation by PRKCD and/or ubiquitination by TRIM62, triggers disruption of the CARD domain-coiled coil interface, CARD9 homooligomerization and BCL10 recruitment, followed by activation of NF-kappa-B and MAP kinase p38 pathways. Zinc-binding inhibits activation by stabilizing the CARD ground-state conformation and restricting its capacity to form BCL10-nucleating filaments. Adapter protein that plays a key role in innate immune response against fungi by forming signaling complexes downstream of C-type lectin receptors. CARD9-mediated signals are essential for antifungal immunity against a subset of fungi from the phylum Ascomycota. Transduces signals in myeloid cells downstream of C-type lectin receptors CLEC7A (dectin-1), CLEC6A (dectin-2) and CLEC4E (Mincle), which detect pathogen-associated molecular pattern metabolites (PAMPs), such as fungal carbohydrates, and trigger CARD9 activation. Upon activation, CARD9 homooligomerizes to form a nucleating helical template that recruits BCL10 via CARD-CARD interaction, thereby promoting polymerization of BCL10 and subsequent recruitment of MALT1: this leads to activation of NF-kappa-B and MAP kinase p38 (MAPK11, MAPK12, MAPK13 and/or MAPK14) pathways which stimulate expression of genes encoding pro-inflammatory cytokines and chemokines. CARD9 signaling in antigen-presenting cells links innate sensing of fungi to the activation of adaptive immunity and provides a cytokine milieu that induces the development and subsequent of interleukin 17-producing T helper (Th17) cells. Also involved in activation of myeloid cells via classical ITAM-associated receptors and TLR: required for TLR-mediated activation of MAPK, while it is not required for TLR-induced activation of NF-kappa-B. CARD9 can also be engaged independently of BCL10: forms a complex with RASGRF1 downstream of C-type lectin receptors, which recruits and activates HRAS, leading to ERK activation and the production of cytokines. Acts as an important regulator of the intestinal commensal fungi (mycobiota) component of the gut microbiota. Plays an essential role in antifungal immunity against dissemination of gut fungi: acts by promoting induction of antifungal IgG antibodies response in CX3CR1(+) macrophages to confer protection against disseminated C.albicans or C.auris infection. Also mediates immunity against other pathogens, such as certain bacteria, viruses and parasites; CARD9 signaling is however redundant with other innate immune responses. In response to L.monocytogenes infection, required for the production of inflammatory cytokines activated by intracellular peptidoglycan: acts by connecting NOD2 recognition of peptidoglycan to downstream activation of MAP kinases (MAPK) without activating NF-kappa-B. The sequence is that of Caspase recruitment domain-containing protein 9 from Homo sapiens (Human).